We begin with the raw amino-acid sequence, 368 residues long: Riboflavin biosynthesis protein RibD (368 aa).

A deaminase region spans residues 1-146 (MISDQTHMRR…EAFCFRIKHQ (146 aa)). The region spanning 2 to 124 (ISDQTHMRRC…RLRQAGIEVK (123 aa)) is the CMP/dCMP-type deaminase domain. Residue histidine 51 coordinates Zn(2+). Catalysis depends on glutamate 53, which acts as the Proton donor. Cysteine 76 and cysteine 85 together coordinate Zn(2+). Residues 147 to 368 (RPFGIFKYAM…GNDDNGQSNI (222 aa)) form a reductase region. Alanine 155 provides a ligand contact to NADP(+). A substrate-binding site is contributed by serine 169. Position 171 (tryptophan 171) interacts with NADP(+). Arginine 185 is a binding site for substrate. Threonine 197 and aspartate 201 together coordinate NADP(+). The substrate site is built by leucine 205 and glutamate 289. 291-297 (GGILAAE) is a binding site for NADP(+).

It in the N-terminal section; belongs to the cytidine and deoxycytidylate deaminase family. This sequence in the C-terminal section; belongs to the HTP reductase family. Zn(2+) is required as a cofactor.

The enzyme catalyses 2,5-diamino-6-hydroxy-4-(5-phosphoribosylamino)-pyrimidine + H2O + H(+) = 5-amino-6-(5-phospho-D-ribosylamino)uracil + NH4(+). The catalysed reaction is 5-amino-6-(5-phospho-D-ribitylamino)uracil + NADP(+) = 5-amino-6-(5-phospho-D-ribosylamino)uracil + NADPH + H(+). It participates in cofactor biosynthesis; riboflavin biosynthesis; 5-amino-6-(D-ribitylamino)uracil from GTP: step 2/4. Its pathway is cofactor biosynthesis; riboflavin biosynthesis; 5-amino-6-(D-ribitylamino)uracil from GTP: step 3/4. In terms of biological role, converts 2,5-diamino-6-(ribosylamino)-4(3h)-pyrimidinone 5'-phosphate into 5-amino-6-(ribosylamino)-2,4(1h,3h)-pyrimidinedione 5'-phosphate. The chain is Riboflavin biosynthesis protein RibD (ribD) from Synechocystis sp. (strain ATCC 27184 / PCC 6803 / Kazusa).